Consider the following 123-residue polypeptide: Large ribosomal subunit protein uL14 (123 aa).

It belongs to the universal ribosomal protein uL14 family. As to quaternary structure, part of the 50S ribosomal subunit. Forms a cluster with proteins L3 and L19. In the 70S ribosome, L14 and L19 interact and together make contacts with the 16S rRNA in bridges B5 and B8.

Its function is as follows. Binds to 23S rRNA. Forms part of two intersubunit bridges in the 70S ribosome. The chain is Large ribosomal subunit protein uL14 from Photorhabdus laumondii subsp. laumondii (strain DSM 15139 / CIP 105565 / TT01) (Photorhabdus luminescens subsp. laumondii).